Reading from the N-terminus, the 267-residue chain is Eukaryotic translation initiation factor 3 subunit J (267 aa).

The tract at residues 1–70 (MSWNDDDVFA…KDKKSSTDQV (70 aa)) is disordered. Positions 24-38 (WDAEEPIMESWDAEE) are enriched in acidic residues. A compositionally biased stretch (basic and acidic residues) spans 39 to 66 (TPAKKETSPKPDSKKNAKKDSKKDKKSS). Residues 192-220 (IESIRQSIATLNVLMKDKEREERRARLAK) adopt a coiled-coil conformation.

This sequence belongs to the eIF-3 subunit J family. In terms of assembly, component of the eukaryotic translation initiation factor 3 (eIF-3) complex.

It is found in the cytoplasm. Functionally, component of the eukaryotic translation initiation factor 3 (eIF-3) complex, which is involved in protein synthesis of a specialized repertoire of mRNAs and, together with other initiation factors, stimulates binding of mRNA and methionyl-tRNAi to the 40S ribosome. The eIF-3 complex specifically targets and initiates translation of a subset of mRNAs involved in cell proliferation. In Vanderwaltozyma polyspora (strain ATCC 22028 / DSM 70294 / BCRC 21397 / CBS 2163 / NBRC 10782 / NRRL Y-8283 / UCD 57-17) (Kluyveromyces polysporus), this protein is Eukaryotic translation initiation factor 3 subunit J.